A 586-amino-acid polypeptide reads, in one-letter code: Paxillin (586 aa).

The residue at position 1 (Met1) is an N-acetylmethionine. Residues 3–15 (DLDALLADLESTT) carry the LD motif 1 motif. The segment at 13 to 138 (STTSHISKRP…PSPTVMSSSL (126 aa)) is disordered. Tyr31 is modified (phosphotyrosine; by PTK6). Positions 45-54 (VPPPVPPPPS) are enriched in pro residues. 2 positions are modified to phosphoserine: Ser83 and Ser85. A compositionally biased stretch (low complexity) spans 86–98 (PIYSSSTKNSSAS). At Tyr88 the chain carries Phosphotyrosine. Phosphoserine is present on Ser106. A Phosphotyrosine; by PTK6 modification is found at Tyr118. Phosphoserine occurs at positions 119, 126, and 130. The span at 121–137 (PNKQKSAEPSPTVMSSS) shows a compositional bias: polar residues. The residue at position 132 (Thr132) is a Phosphothreonine. A phosphoserine mark is found at Ser137, Ser140, and Ser143. The LD motif 2 motif lies at 144 to 156 (ELDRLLLELNAVQ). The residue at position 210 (Tyr210) is a Phosphotyrosine. The tract at residues 220-241 (GGKAGPLMKEKPKRNGGRGLED) is disordered. The short motif at 245–257 (SVESLLDELENSV) is the LD motif 3 element. The residue at position 259 (Ser259) is a Phosphoserine. Residues 266–290 (VNQGEMSSPQRVTSSQQQTRISASS) are disordered. A Phosphoserine; by CDK5 modification is found at Ser273. Phosphoserine is present on residues Ser279, Ser287, Ser290, Ser301, Ser317, Ser327, and Ser335. The segment at 291–310 (ATRELDELMASLSDFKFMAQ) is required for binding to PARVA and ILK. The LD motif 4 signature appears at 294 to 305 (ELDELMASLSDF). A disordered region spans residues 309–329 (AQGKTGSSSPPGGLSKPGSQL). Residues 310 to 329 (QGKTGSSSPPGGLSKPGSQL) are compositionally biased toward low complexity. The LD motif 5 motif lies at 328–340 (QLDSMLGSLQSDL). 3 LIM zinc-binding domains span residues 353–403 (CGAC…CEKD), 412–462 (CYYC…CRKD), and 471–521 (CGGC…CEVH). Residue Ser528 is modified to Phosphoserine. Residues 530–580 (CSGCQKPITGRCITAMAKKFHPEHFVCAFCLKQLNKGTFKEQNDKPYCQSC) enclose the LIM zinc-binding 4 domain.

It belongs to the paxillin family. In terms of assembly, interacts in vitro with VCL/vinculin as well as to the SH3 domain of SRC and, when tyrosine phosphorylated, to the SH2 domain of CRK. Interacts with GIT1. Interacts with NUDT16L1/SDOS. Interacts with PTK2/FAK1. Interacts with PTK2B/PYK2. Interacts with ASAP2. Interacts with unphosphorylated ITGA4. Interacts with RNF5. Interacts with PDCD10. Interacts with NEK3, the interaction is prolactin-dependent. Interacts with PTK6. Interacts with TGFB1I1. Interacts with SORBS1. Interacts with PARVB. Interacts (via LD motif 4) with PARVA/PARVIN. Interacts (via LD motif 4) with ILK. Interacts (via cytoplasmic domain) with CEACAM1; the interaction is phosphotyrosyl-dependent. Interacts with LIMA1; this complex stabilizes actin dynamics. Interacts with CD36 (via C-terminus). Interacts with TRIM15. Interacts with PAK4; PAK4 acts as a scaffold to suppport PAXI phosphorylation at Ser-301. Post-translationally, phosphorylated by MAPK1/ERK2. Phosphorylated on tyrosine residues during integrin-mediated cell adhesion, embryonic development, fibroblast transformation and following stimulation of cells by mitogens. Phosphorylation at Ser-273 by CDK5 reduces its interaction with PTK2/FAK1 in matrix-cell focal adhesions (MCFA) during oligodendrocytes (OLs) differentiation. Phosphorylation at Tyr-31 and Tyr-118 by PTK6 promote the activation of RAC1 via CRK/CrKII, thereby promoting migration and invasion. Phosphorylation at Ser-279 by SLK is required for PXN redistribution and cell motility. Phosphorylation at Ser-301 promotes focal adhesion disassembly during cell migration.

It localises to the cytoplasm. The protein localises to the cytoskeleton. The protein resides in the cell junction. It is found in the focal adhesion. Its subcellular location is the cell cortex. Cytoskeletal protein involved in actin-membrane attachment at sites of cell adhesion to the extracellular matrix (focal adhesion). Recruits other proteins such as TRIM15 to focal adhesion. This is Paxillin from Rattus norvegicus (Rat).